Here is a 66-residue protein sequence, read N- to C-terminus: UPF0337 protein RPA4217 (66 aa).

The protein belongs to the UPF0337 (CsbD) family.

This chain is UPF0337 protein RPA4217, found in Rhodopseudomonas palustris (strain ATCC BAA-98 / CGA009).